The following is a 358-amino-acid chain: 3-isopropylmalate dehydrogenase (358 aa).

NAD(+) is bound at residue 77 to 90 (GPKWDNLPIDQRPE). Substrate is bound by residues Arg-98, Arg-108, Arg-137, and Asp-221. Positions 221, 245, and 249 each coordinate Mg(2+). 279–291 (GSAPDIAHLNIAN) serves as a coordination point for NAD(+).

The protein belongs to the isocitrate and isopropylmalate dehydrogenases family. LeuB type 1 subfamily. In terms of assembly, homodimer. Mg(2+) serves as cofactor. Mn(2+) is required as a cofactor.

It localises to the cytoplasm. The enzyme catalyses (2R,3S)-3-isopropylmalate + NAD(+) = 4-methyl-2-oxopentanoate + CO2 + NADH. Its pathway is amino-acid biosynthesis; L-leucine biosynthesis; L-leucine from 3-methyl-2-oxobutanoate: step 3/4. In terms of biological role, catalyzes the oxidation of 3-carboxy-2-hydroxy-4-methylpentanoate (3-isopropylmalate) to 3-carboxy-4-methyl-2-oxopentanoate. The product decarboxylates to 4-methyl-2 oxopentanoate. The chain is 3-isopropylmalate dehydrogenase from Campylobacter jejuni (strain RM1221).